The chain runs to 494 residues: Cytochrome P450 monooxygenase ccsD (494 aa).

A helical transmembrane segment spans residues 5–25 (ISPRTLVLLAVTCSLLVLYFS). Position 438 (cysteine 438) interacts with heme. 2 N-linked (GlcNAc...) asparagine glycosylation sites follow: asparagine 445 and asparagine 477.

This sequence belongs to the cytochrome P450 family. Heme serves as cofactor.

It localises to the membrane. The protein operates within mycotoxin biosynthesis. Cytochrome P450 monooxygenase; part of the gene cluster that mediates the biosynthesis of a family of the mycotoxins cytochalasins E and K. The hybrid PKS-NRPS synthetase ccsA and the enoyl reductase ccsC are responsible for fusion of phenylalanine with an octaketide backbone and subsequent release of the stable tetramic acid precursor. The polyketide synthase module (PKS) of the PKS-NRPS ccsA is responsible for the synthesis of the octaketide backbone. The downstream nonribosomal peptide synthetase (NRPS) amidates the carboxyl end of the octaketide with a phenylalanine. A reductase-like domain (R) at the C-terminus catalyzes the reductive release of the polyketide-amino acid intermediate. Because ccsA lacks a designated enoylreductase (ER) domain, the required activity is provided the enoyl reductase ccsC. Upon formation of the 11-membered carbocycle-fused perhydroisoindolone intermediate, a number of oxidative steps are required to afford the final cytochalasin E and K, including two hydroxylations at C17 and C18, one alcohol oxidation at C17, one epoxidation at C6 and C7 and two Baeyer-Villiger oxidations. The oxidative modification at C17, C18 and the C6-C7 epoxidation are likely to be catalyzed by the two cytochrome P450 oxygenases ccsD and ccsG. CcsD may be responsible for the epoxidation of the C6-C7 double bond. CcsG may be responsible for the successive oxidative modifications at C17 and C18. The double Baeyer-Villiger oxidations of ketocytochalasin to precytochalasin and cytochalasin Z(16) are among the final steps leading to cytochalasin E and K and are catalyzed by ccsB. The first oxygen insertion step follows that of the classic BVMO mechanism, generating the ester precytochalasin. Release of precytochalasin into an aqueous environment can generate the shunt product iso-precytochalasin through spontaneous isomerization. Alternatively, precytochalasin can undergo further oxidation by ccsB to yield the in-line carbonate-containing cytochalasin Z(16). Cytochalasin Z(16) is a precursor to cytochalasin E and cytochalasin K, whereas iso-precytochalasin is a precursor to cytochalasin Z(17) and rosellichalasin. The hydrolyase ccsE may catalyze hydrolysis of epoxide bond in cytochalasin E to afford cytochalasin K. The function of ccsF has not been assigned but it may play a role in post-PKS-NRPS biosynthetic step, resistance or transport of cytochalasins and related PKS-NRPS products. This chain is Cytochrome P450 monooxygenase ccsD, found in Aspergillus clavatus (strain ATCC 1007 / CBS 513.65 / DSM 816 / NCTC 3887 / NRRL 1 / QM 1276 / 107).